The primary structure comprises 938 residues: Isoleucine--tRNA ligase (938 aa).

Residues 58 to 68 carry the 'HIGH' region motif; the sequence is PYANGSIHIGH. E561 contributes to the L-isoleucyl-5'-AMP binding site. The 'KMSKS' region signature appears at 602–606; that stretch reads KMSKS. Residue K605 participates in ATP binding. Positions 901, 904, 921, and 924 each coordinate Zn(2+).

Belongs to the class-I aminoacyl-tRNA synthetase family. IleS type 1 subfamily. In terms of assembly, monomer. Zn(2+) is required as a cofactor.

It localises to the cytoplasm. It catalyses the reaction tRNA(Ile) + L-isoleucine + ATP = L-isoleucyl-tRNA(Ile) + AMP + diphosphate. Its function is as follows. Catalyzes the attachment of isoleucine to tRNA(Ile). As IleRS can inadvertently accommodate and process structurally similar amino acids such as valine, to avoid such errors it has two additional distinct tRNA(Ile)-dependent editing activities. One activity is designated as 'pretransfer' editing and involves the hydrolysis of activated Val-AMP. The other activity is designated 'posttransfer' editing and involves deacylation of mischarged Val-tRNA(Ile). This is Isoleucine--tRNA ligase from Erwinia tasmaniensis (strain DSM 17950 / CFBP 7177 / CIP 109463 / NCPPB 4357 / Et1/99).